A 397-amino-acid polypeptide reads, in one-letter code: 3-hydroxybenzoate 6-hydroxylase (397 aa).

Belongs to the 3-hydroxybenzoate 6-hydroxylase family. Monomer. FAD is required as a cofactor.

It carries out the reaction 3-hydroxybenzoate + NADH + O2 + H(+) = 2,5-dihydroxybenzoate + NAD(+) + H2O. Its activity is regulated as follows. Inhibited by copper, mercury and iron ions. Catalyzes the NAD- or NADP-dependent conversion of 3-hydroxybenzoate to gentisate. NAD and NADP function equally well. The chain is 3-hydroxybenzoate 6-hydroxylase (mhbM) from Klebsiella oxytoca.